The following is a 281-amino-acid chain: Phosphatidylglycerol--prolipoprotein diacylglyceryl transferase (281 aa).

4 helical membrane-spanning segments follow: residues Val23–Trp43, Phe71–Tyr91, Trp107–Phe127, and Ile133–Val153. Arg154 serves as a coordination point for a 1,2-diacyl-sn-glycero-3-phospho-(1'-sn-glycerol). The next 3 membrane-spanning stretches (helical) occupy residues Leu189–Val209, Gly217–Phe237, and Leu247–Leu267.

This sequence belongs to the Lgt family.

Its subcellular location is the cell inner membrane. It catalyses the reaction L-cysteinyl-[prolipoprotein] + a 1,2-diacyl-sn-glycero-3-phospho-(1'-sn-glycerol) = an S-1,2-diacyl-sn-glyceryl-L-cysteinyl-[prolipoprotein] + sn-glycerol 1-phosphate + H(+). It functions in the pathway protein modification; lipoprotein biosynthesis (diacylglyceryl transfer). Functionally, catalyzes the transfer of the diacylglyceryl group from phosphatidylglycerol to the sulfhydryl group of the N-terminal cysteine of a prolipoprotein, the first step in the formation of mature lipoproteins. This is Phosphatidylglycerol--prolipoprotein diacylglyceryl transferase from Brucella anthropi (strain ATCC 49188 / DSM 6882 / CCUG 24695 / JCM 21032 / LMG 3331 / NBRC 15819 / NCTC 12168 / Alc 37) (Ochrobactrum anthropi).